A 193-amino-acid polypeptide reads, in one-letter code: Non-specific lipid transfer protein GPI-anchored 10 (193 aa).

The N-terminal stretch at 1-24 (MASSTLLITLLISLSAFFLRMVLA) is a signal peptide. Disulfide bonds link C30–C71, C40–C55, C56–C98, and C69–C107. 3 N-linked (GlcNAc...) asparagine glycosylation sites follow: N76, N87, and N103. A disordered region spans residues 109 to 140 (SSFPGEAPSDSSSVAPPPSSSTGSQISQGAKN). Low complexity predominate over residues 116 to 132 (PSDSSSVAPPPSSSTGS). N-linked (GlcNAc...) asparagine glycosylation is present at N140. S168 carries GPI-anchor amidated serine lipidation. The propeptide at 169–193 (SGSKSEIQLTIFALAAILPAALLLI) is removed in mature form.

The protein belongs to the plant LTP family.

It localises to the cell membrane. Probable lipid transfer protein. In Arabidopsis thaliana (Mouse-ear cress), this protein is Non-specific lipid transfer protein GPI-anchored 10.